Here is a 218-residue protein sequence, read N- to C-terminus: NAD(P)H-quinone oxidoreductase subunit I (218 aa).

4Fe-4S ferredoxin-type domains follow at residues 55–84 and 95–124; these read GRIHYEFDKCIACEVCVRVCPINLPVVDWV and RNYSIDFGACIFCGNCVEYCPTNCLSMTEE. The [4Fe-4S] cluster site is built by Cys64, Cys67, Cys70, Cys74, Cys104, Cys107, Cys110, and Cys114. Residues 169–218 are disordered; it reads MDPHELPANQQRAGKLPSQIIKELQAEKSEEKGNNNSSDIVPNKLNSTNK. Over residues 192-201 the composition is skewed to basic and acidic residues; sequence LQAEKSEEKG. The segment covering 202–218 has biased composition (polar residues); the sequence is NNNSSDIVPNKLNSTNK.

This sequence belongs to the complex I 23 kDa subunit family. As to quaternary structure, NDH-1 is composed of at least 11 different subunits. [4Fe-4S] cluster is required as a cofactor.

The protein localises to the cellular thylakoid membrane. It catalyses the reaction a plastoquinone + NADH + (n+1) H(+)(in) = a plastoquinol + NAD(+) + n H(+)(out). The enzyme catalyses a plastoquinone + NADPH + (n+1) H(+)(in) = a plastoquinol + NADP(+) + n H(+)(out). NDH-1 shuttles electrons from an unknown electron donor, via FMN and iron-sulfur (Fe-S) centers, to quinones in the respiratory and/or the photosynthetic chain. The immediate electron acceptor for the enzyme in this species is believed to be plastoquinone. Couples the redox reaction to proton translocation, and thus conserves the redox energy in a proton gradient. The chain is NAD(P)H-quinone oxidoreductase subunit I from Prochlorococcus marinus (strain NATL1A).